The chain runs to 183 residues: Adenylate kinase (183 aa).

12-17 (GAGKGT) is an ATP binding site. Residues 32-61 (STGDLLRAEVSAGSALGQEAESVMNRGELV) are NMP. Residues Thr-33, Arg-38, 59–61 (ELV), 86–89 (GFPR), and Gln-93 each bind AMP. An LID region spans residues 127 to 133 (SRGRDDD). Arg-128 is an ATP binding site. Residues Arg-130 and Arg-141 each contribute to the AMP site. Gly-169 serves as a coordination point for ATP.

It belongs to the adenylate kinase family. As to quaternary structure, monomer.

It localises to the cytoplasm. It carries out the reaction AMP + ATP = 2 ADP. The protein operates within purine metabolism; AMP biosynthesis via salvage pathway; AMP from ADP: step 1/1. Its function is as follows. Catalyzes the reversible transfer of the terminal phosphate group between ATP and AMP. Plays an important role in cellular energy homeostasis and in adenine nucleotide metabolism. This chain is Adenylate kinase, found in Synechococcus sp. (strain CC9311).